A 342-amino-acid polypeptide reads, in one-letter code: Glutamyl endopeptidase (342 aa).

The first 29 residues, 1-29, serve as a signal peptide directing secretion; it reads MKGKFLKVSSLFVATLTTATLVSSPAANA. The propeptide occupies 30–68; sequence LSSKAMDNHPQQTQSSKQQTPKIKKGGNLKPLEQREHAN. A disordered region spans residues 33-63; the sequence is KAMDNHPQQTQSSKQQTPKIKKGGNLKPLEQ. Positions 39–50 are enriched in low complexity; it reads PQQTQSSKQQTP. Active-site charge relay system residues include H119, D161, and S237. Positions 283 to 342 are disordered; sequence FANDDQPNNPDNPDNPNNPDNPNNPDNPNNPDEPNNPDNPNNPDNPDNGDNNNSDNPDAA. The segment covering 286 to 342 has biased composition (low complexity); it reads DDQPNNPDNPDNPNNPDNPNNPDNPNNPDEPNNPDNPNNPDNPDNGDNNNSDNPDAA. Repeat copies occupy residues 289-291, 292-294, 295-297, 298-300, 301-303, 304-306, 307-309, 310-312, 316-318, 319-321, 322-324, 325-327, and 328-330. A 13 X 3 AA repeats of P-[DN]-N region spans residues 289-330; sequence PNNPDNPDNPNNPDNPNNPDNPNNPDEPNNPDNPNNPDNPDN.

Belongs to the peptidase S1B family. Proteolytically cleaved by aureolysin (aur). This cleavage leads to the activation of SspA.

It is found in the secreted. It carries out the reaction Preferential cleavage: Glu-|-Xaa, Asp-|-Xaa.. Preferentially cleaves peptide bonds on the carboxyl-terminal side of aspartate and glutamate. Along with other extracellular proteases it is involved in colonization and infection of human tissues. Required for proteolytic maturation of thiol protease SspB and inactivation of SspC, an inhibitor of SspB. It is the most important protease for degradation of fibronectin-binding protein (FnBP) and surface protein A, which are involved in adherence to host cells. May also protect bacteria against host defense mechanism by cleaving the immunoglobulin classes IgG, IgA and IgM. May be involved in the stability of secreted lipases. This is Glutamyl endopeptidase (sspA) from Staphylococcus aureus (strain Mu50 / ATCC 700699).